Here is a 275-residue protein sequence, read N- to C-terminus: Urease accessory protein UreD (275 aa).

Belongs to the UreD family. As to quaternary structure, ureD, UreF and UreG form a complex that acts as a GTP-hydrolysis-dependent molecular chaperone, activating the urease apoprotein by helping to assemble the nickel containing metallocenter of UreC. The UreE protein probably delivers the nickel.

It is found in the cytoplasm. Its function is as follows. Required for maturation of urease via the functional incorporation of the urease nickel metallocenter. The polypeptide is Urease accessory protein UreD (Cereibacter sphaeroides (strain ATCC 17023 / DSM 158 / JCM 6121 / CCUG 31486 / LMG 2827 / NBRC 12203 / NCIMB 8253 / ATH 2.4.1.) (Rhodobacter sphaeroides)).